We begin with the raw amino-acid sequence, 699 residues long: Chitinase A1 (699 aa).

An N-terminal signal peptide occupies residues 1–41; sequence MINLNKHTAFKKTAKFFLGLSLLLSVIVPSFALQPATAEAA. In terms of domain architecture, GH18 spans 44-454; it reads YKIVGYYPSW…NKLKADLPTG (411 aa). Residues 135–136 and 162–165 each bind chitin; these read DQ and GGWT. The Proton donor role is filled by Glu204. Chitin is bound by residues Tyr205, 277-280, and Trp433; that span reads MTYD. The tract at residues 449 to 471 is disordered; it reads ADLPTGGTVPPVDTTAPSVPGNA. Residues 452 to 465 show a composition bias toward low complexity; it reads PTGGTVPPVDTTAP. 2 consecutive Fibronectin type-III domains span residues 467-553 and 562-647; these read VPGN…TAQP and APTN…TAAE.

The protein belongs to the glycosyl hydrolase 18 family. Chitinase class II subfamily.

The catalysed reaction is Random endo-hydrolysis of N-acetyl-beta-D-glucosaminide (1-&gt;4)-beta-linkages in chitin and chitodextrins.. In Niallia circulans (Bacillus circulans), this protein is Chitinase A1 (chiA1).